The sequence spans 227 residues: ATP synthase F(0) complex subunit a (227 aa).

The next 6 helical transmembrane spans lie at 12-32, 69-89, 98-118, 139-159, 170-190, and 196-216; these read PYLM…LLFP, WALL…MGLL, QLSM…LIGL, IPIL…ALGV, LLIQ…PSIS, and ILLL…YVFV.

Belongs to the ATPase A chain family. As to quaternary structure, component of the ATP synthase complex composed at least of ATP5F1A/subunit alpha, ATP5F1B/subunit beta, ATP5MC1/subunit c (homooctomer), MT-ATP6/subunit a, MT-ATP8/subunit 8, ATP5ME/subunit e, ATP5MF/subunit f, ATP5MG/subunit g, ATP5MK/subunit k, ATP5MJ/subunit j, ATP5F1C/subunit gamma, ATP5F1D/subunit delta, ATP5F1E/subunit epsilon, ATP5PF/subunit F6, ATP5PB/subunit b, ATP5PD/subunit d, ATP5PO/subunit OSCP. ATP synthase complex consists of a soluble F(1) head domain (subunits alpha(3) and beta(3)) - the catalytic core - and a membrane F(0) domain - the membrane proton channel (subunits c, a, 8, e, f, g, k and j). These two domains are linked by a central stalk (subunits gamma, delta, and epsilon) rotating inside the F1 region and a stationary peripheral stalk (subunits F6, b, d, and OSCP). Interacts with DNAJC30; interaction is direct.

It is found in the mitochondrion inner membrane. It catalyses the reaction H(+)(in) = H(+)(out). Subunit a, of the mitochondrial membrane ATP synthase complex (F(1)F(0) ATP synthase or Complex V) that produces ATP from ADP in the presence of a proton gradient across the membrane which is generated by electron transport complexes of the respiratory chain. ATP synthase complex consist of a soluble F(1) head domain - the catalytic core - and a membrane F(1) domain - the membrane proton channel. These two domains are linked by a central stalk rotating inside the F(1) region and a stationary peripheral stalk. During catalysis, ATP synthesis in the catalytic domain of F(1) is coupled via a rotary mechanism of the central stalk subunits to proton translocation. With the subunit c (ATP5MC1), forms the proton-conducting channel in the F(0) domain, that contains two crucial half-channels (inlet and outlet) that facilitate proton movement from the mitochondrial intermembrane space (IMS) into the matrix. Protons are taken up via the inlet half-channel and released through the outlet half-channel, following a Grotthuss mechanism. This chain is ATP synthase F(0) complex subunit a, found in Coturnix japonica (Japanese quail).